The primary structure comprises 167 residues: U-scoloptoxin-Er5c (167 aa).

A signal peptide spans 1-22; the sequence is MKTNCEFPLLCLLIVLVANVEG. Residues 23-94 constitute a propeptide that is removed on maturation; sequence EVEDTGLKMV…KRLWRNWERR (72 aa). RLWRNWE repeat units lie at residues 34 to 40, 61 to 67, and 86 to 92; these read RLWRNWE. Gln95 carries the post-translational modification Pyrrolidone carboxylic acid. Residues 107–113 form an RLWRNWE 4; approximate repeat; sequence ELWRNWE. A propeptide spanning residues 112–118 is cleaved from the precursor; sequence WEDLKRR. Gln119 bears the Pyrrolidone carboxylic acid mark. Residues 134–140 form an RLWRNWE 5 repeat; sequence RLWRNWE. A propeptide spanning residues 139 to 167 is cleaved from the precursor; the sequence is WEDNHATLRKRSADSLSRQKRLGRERGKE. Positions 147–167 are disordered; sequence RKRSADSLSRQKRLGRERGKE.

This sequence belongs to the scoloptoxin-08 family. As to expression, expressed by the venom gland.

It localises to the secreted. This chain is U-scoloptoxin-Er5c, found in Ethmostigmus rubripes (Giant centipede).